Here is a 229-residue protein sequence, read N- to C-terminus: Peptidase E (229 aa).

Catalysis depends on charge relay system residues serine 120, aspartate 135, and histidine 157.

The protein belongs to the peptidase S51 family.

The protein localises to the cytoplasm. The enzyme catalyses Dipeptidase E catalyzes the hydrolysis of dipeptides Asp-|-Xaa. It does not act on peptides with N-terminal Glu, Asn or Gln, nor does it cleave isoaspartyl peptides.. In terms of biological role, hydrolyzes dipeptides containing N-terminal aspartate residues. May play a role in allowing the cell to use peptide aspartate to spare carbon otherwise required for the synthesis of the aspartate family of amino acids. The chain is Peptidase E from Salmonella paratyphi A (strain AKU_12601).